The chain runs to 506 residues: Kynurenine 3-monooxygenase (506 aa).

Residues 153–175 (QETSLLPGEESEKDKKQNTEDED) form a disordered region. Over residues 162–171 (ESEKDKKQNT) the composition is skewed to basic and acidic residues.

This sequence belongs to the aromatic-ring hydroxylase family. KMO subfamily. The cofactor is FAD.

It is found in the mitochondrion outer membrane. The enzyme catalyses L-kynurenine + NADPH + O2 + H(+) = 3-hydroxy-L-kynurenine + NADP(+) + H2O. Its pathway is cofactor biosynthesis; NAD(+) biosynthesis; quinolinate from L-kynurenine: step 1/3. Functionally, catalyzes the hydroxylation of L-kynurenine (L-Kyn) to form 3-hydroxy-L-kynurenine (L-3OHKyn). Required for synthesis of quinolinic acid. This Cryptococcus neoformans var. neoformans serotype D (strain B-3501A) (Filobasidiella neoformans) protein is Kynurenine 3-monooxygenase.